Here is a 487-residue protein sequence, read N- to C-terminus: uncharacterized protein (487 aa).

The first 31 residues, 1–31 (MRFHRQGISAIIGVLLIVLLGFCWKLSGSYG), serve as a signal peptide directing secretion. 8 N-linked (GlcNAc...) asparagine glycosylation sites follow: Asn40, Asn68, Asn150, Asn220, Asn304, Asn367, Asn442, and Asn448. The disordered stretch occupies residues 141–176 (LERRHGRFGNGTNGDHPKGPPPPPPPPDEKGRGSQK).

N-glycosylated.

This is an uncharacterized protein from Saccharomyces cerevisiae (strain ATCC 204508 / S288c) (Baker's yeast).